The sequence spans 341 residues: MKALSKLKAEEGIWMTDVPVPELGHNDLLIKIRKTAICGTDVHIYNWDEWSQKTIPVPMVVGHEYVGEVVGIGQEVKGFKIGDRVSGEGHITCGHCRNCRGGRTHLCRNTIGVGVNRPGCFAEYLVIPAFNAFKIPDNISDDLASIFDPFGNAVHTALSFDLVGEDVLVSGAGPIGIMAAAVAKHVGARNVVITDVNEYRLELARKMGITRAVNVAKENLNDVMAELGMTEGFDVGLEMSGAPPAFRTMLDTMNHGGRIAMLGIPPSDMSIDWTKVIFKGLFIKGIYGREMFETWYKMAALIQSGLDLSPIITHRFSIDDFQKGFDAMRSGQSGKVILSWD.

Cys38 is a binding site for Zn(2+). Residues Thr40 and His43 each act as charge relay system in the active site. The Zn(2+) site is built by His63, Glu64, Cys93, Cys96, Cys99, and Cys107. NAD(+)-binding positions include Ile175, Asp195, Arg200, 262–264, and 286–287; these read LGI and IY.

The protein belongs to the zinc-containing alcohol dehydrogenase family. Homotetramer. Zn(2+) is required as a cofactor.

The protein localises to the cytoplasm. The enzyme catalyses L-threonine + NAD(+) = (2S)-2-amino-3-oxobutanoate + NADH + H(+). It functions in the pathway amino-acid degradation; L-threonine degradation via oxydo-reductase pathway; glycine from L-threonine: step 1/2. In terms of biological role, catalyzes the NAD(+)-dependent oxidation of L-threonine to 2-amino-3-ketobutyrate. The polypeptide is L-threonine 3-dehydrogenase (Shigella boydii serotype 4 (strain Sb227)).